The chain runs to 829 residues: Periplasmic nitrate reductase (829 aa).

A signal peptide (tat-type signal) is located at residues 1 to 30; sequence MKMTRRAFVKANAAASAAAVAGITLPASAA. In terms of domain architecture, 4Fe-4S Mo/W bis-MGD-type spans 41–97; sequence ITWDKAPCRFCGTGCSVLVGTQNGKVVATQGDPEAPVNKGLNCIKGYFLSKIMYGQD. 4 residues coordinate [4Fe-4S] cluster: C48, C51, C55, and C83. Mo-bis(molybdopterin guanine dinucleotide)-binding positions include K85, Q152, N177, C181, 214–221, 245–249, 264–266, M374, Q378, N484, 510–511, K533, D560, and 718–727; these read WGSNMAEM, STYYH, QSD, SD, and TGRVLEHWHT. Substrate is bound at residue F794. Residues N802 and K819 each contribute to the Mo-bis(molybdopterin guanine dinucleotide) site.

This sequence belongs to the prokaryotic molybdopterin-containing oxidoreductase family. NasA/NapA/NarB subfamily. In terms of assembly, component of the periplasmic nitrate reductase NapAB complex composed of NapA and NapB. [4Fe-4S] cluster is required as a cofactor. Requires Mo-bis(molybdopterin guanine dinucleotide) as cofactor. Predicted to be exported by the Tat system. The position of the signal peptide cleavage has not been experimentally proven.

It is found in the periplasm. The catalysed reaction is 2 Fe(II)-[cytochrome] + nitrate + 2 H(+) = 2 Fe(III)-[cytochrome] + nitrite + H2O. Its function is as follows. Catalytic subunit of the periplasmic nitrate reductase complex NapAB. Receives electrons from NapB and catalyzes the reduction of nitrate to nitrite. The polypeptide is Periplasmic nitrate reductase (Vibrio vulnificus (strain CMCP6)).